The sequence spans 42 residues: Beta-defensin 13 (42 aa).

3 disulfide bridges follow: Cys-9–Cys-38, Cys-16–Cys-31, and Cys-21–Cys-39.

This sequence belongs to the beta-defensin family. As to expression, neutrophilic granules.

The protein localises to the secreted. Functionally, has bactericidal activity. Active against E.coli ML35 and S.aureus 502A. This chain is Beta-defensin 13 (DEFB13), found in Bos taurus (Bovine).